Here is a 152-residue protein sequence, read N- to C-terminus: SMN complex subunit smn1 (152 aa).

Residues 26 to 51 (KKYHSIEAKGGVSDPDSRLDGEKLIS) are interacts with yip11/gem2. The disordered stretch occupies residues 88–110 (DNKGLSDEKPETRAAETHQEFME). The segment covering 91 to 108 (GLSDEKPETRAAETHQEF) has biased composition (basic and acidic residues). Residues 130-152 (SWYYAGYYTGLAEGLAKSEQRKD) form a may interact with gem8 region.

Belongs to the SMN family. As to quaternary structure, homooligomer; may form homodimers and homotetramers. Part of the core SMN complex at least composed of smn1, yip11/gem2, gem6, gem7 and gem8. Part of the SMN-Sm complex. Interacts with yip11/gem2; the interaction is direct. Interacts with gem8; the interaction is direct. Interacts with proteins of the Sm complex, including smn1, smb1, smd1, smd2 and smd3.

The protein resides in the nucleus. Functionally, the SMN complex catalyzes the assembly of small nuclear ribonucleoproteins (snRNPs), the building blocks of the spliceosome, and thereby plays an important role in the splicing of cellular pre-mRNAs. Most spliceosomal snRNPs contain a common set of Sm proteins smb1, smd1, smd2, smd3, sme1, smf1 and smg1 that assemble in a heptameric protein ring on the Sm site of the small nuclear RNA to form the core snRNP (Sm core). In the cytosol, the Sm proteins smd1, smd2, sme1, smf1 and smg1 (5Sm) are trapped in an inactive 6S pICln-Sm complex by the chaperone saf5 that controls the assembly of the core snRNP. To assemble core snRNPs, the SMN complex accepts the trapped 5Sm proteins from saf5 forming an intermediate. Binding of snRNA inside 5Sm triggers eviction of the SMN complex, thereby allowing binding of smd3 and smb1 to complete assembly of the core snRNP. Within the SMN complex, smn1 acts as a structural backbone and together with yip11/gem2 it gathers the Sm complex subunits. The protein is SMN complex subunit smn1 of Schizosaccharomyces pombe (strain 972 / ATCC 24843) (Fission yeast).